Consider the following 452-residue polypeptide: Glutamyl-tRNA(Gln) amidotransferase subunit A (452 aa).

Active-site charge relay system residues include K56 and S131. S155 serves as the catalytic Acyl-ester intermediate.

Belongs to the amidase family. GatA subfamily. As to quaternary structure, heterotrimer of A, B and C subunits.

The catalysed reaction is L-glutamyl-tRNA(Gln) + L-glutamine + ATP + H2O = L-glutaminyl-tRNA(Gln) + L-glutamate + ADP + phosphate + H(+). Allows the formation of correctly charged Gln-tRNA(Gln) through the transamidation of misacylated Glu-tRNA(Gln) in organisms which lack glutaminyl-tRNA synthetase. The reaction takes place in the presence of glutamine and ATP through an activated gamma-phospho-Glu-tRNA(Gln). The polypeptide is Glutamyl-tRNA(Gln) amidotransferase subunit A (Campylobacter concisus (strain 13826)).